The chain runs to 259 residues: Thiazole synthase (259 aa).

The Schiff-base intermediate with DXP role is filled by lysine 99. Residues glycine 161, 187-188, and 209-219 each bind 1-deoxy-D-xylulose 5-phosphate; these read AG and NSAIACAQNPI.

This sequence belongs to the ThiG family. In terms of assembly, homotetramer. Forms heterodimers with either ThiH or ThiS.

The protein localises to the cytoplasm. It carries out the reaction [ThiS sulfur-carrier protein]-C-terminal-Gly-aminoethanethioate + 2-iminoacetate + 1-deoxy-D-xylulose 5-phosphate = [ThiS sulfur-carrier protein]-C-terminal Gly-Gly + 2-[(2R,5Z)-2-carboxy-4-methylthiazol-5(2H)-ylidene]ethyl phosphate + 2 H2O + H(+). It functions in the pathway cofactor biosynthesis; thiamine diphosphate biosynthesis. Functionally, catalyzes the rearrangement of 1-deoxy-D-xylulose 5-phosphate (DXP) to produce the thiazole phosphate moiety of thiamine. Sulfur is provided by the thiocarboxylate moiety of the carrier protein ThiS. In vitro, sulfur can be provided by H(2)S. The sequence is that of Thiazole synthase from Aliarcobacter butzleri (strain RM4018) (Arcobacter butzleri).